A 200-amino-acid polypeptide reads, in one-letter code: Small ribosomal subunit protein uS4c (200 aa).

The segment at 20–42 (GLTRKTTTRTSRPGQHGTQARKP) is disordered. A compositionally biased stretch (polar residues) spans 23-37 (RKTTTRTSRPGQHGT). Residues 90–152 (MRLDNVIFRL…PKSQSIVKNY (63 aa)) enclose the S4 RNA-binding domain.

Belongs to the universal ribosomal protein uS4 family. Part of the 30S ribosomal subunit. Contacts protein S5. The interaction surface between S4 and S5 is involved in control of translational fidelity.

It localises to the plastid. It is found in the chloroplast. One of the primary rRNA binding proteins, it binds directly to 16S rRNA where it nucleates assembly of the body of the 30S subunit. In terms of biological role, with S5 and S12 plays an important role in translational accuracy. This Guillardia theta (Cryptophyte) protein is Small ribosomal subunit protein uS4c (rps4).